A 138-amino-acid polypeptide reads, in one-letter code: Basic phospholipase A2 Pla2Vb (138 aa).

An N-terminal signal peptide occupies residues 1-16 (MRTLWIVAVWLMGVEG). 7 disulfide bridges follow: Cys42–Cys131, Cys44–Cys60, Cys59–Cys111, Cys65–Cys138, Cys66–Cys104, Cys73–Cys97, and Cys91–Cys102. 3 residues coordinate Ca(2+): Tyr43, Gly45, and Gly47. His63 is a catalytic residue. Residue Asp64 coordinates Ca(2+). Residue Asp105 is part of the active site.

It belongs to the phospholipase A2 family. Group II subfamily. D49 sub-subfamily. Requires Ca(2+) as cofactor. Expressed by the venom gland.

Its subcellular location is the secreted. The catalysed reaction is a 1,2-diacyl-sn-glycero-3-phosphocholine + H2O = a 1-acyl-sn-glycero-3-phosphocholine + a fatty acid + H(+). Its function is as follows. Snake venom phospholipase A2 (PLA2) that exhibits medium anticoagulant effects by binding to factor Xa (F10) and inhibiting the prothrombinase activity (IC(50) is 90 nM). PLA2 catalyzes the calcium-dependent hydrolysis of the 2-acyl groups in 3-sn-phosphoglycerides. In Vipera berus berus (Common viper), this protein is Basic phospholipase A2 Pla2Vb.